The chain runs to 459 residues: SLIT-ROBO Rho GTPase-activating protein 2C (459 aa).

The region spanning 22-325 (KEIRAQLTEQ…AVENLDATSD (304 aa)) is the F-BAR domain. Over residues 181-202 (LKEAEKQEEKQIGKSVKQEDRQ) the composition is skewed to basic and acidic residues. The segment at 181 to 211 (LKEAEKQEEKQIGKSVKQEDRQTPCSPDSTA) is disordered. The stretch at 363–401 (QSELVQRCQQLQSRLSTLKIENEEVKKTMEATLQTIQDI) forms a coiled coil.

Homodimer. Interacts (via F-BAR domain) with SRGAP2/SRGAP2A (via F-BAR domain); formation of the heterodimer inhibits SRGAP2/SRGAP2A function. As to expression, ubiquitously expressed with higher expression in cerebellum. Probably expressed in fetal and adult neurons (at protein level).

Its function is as follows. Human-specific protein that acts as a key modifier of cortical connectivity in the human brain. Acts by inhibiting the functions of ancestral paralog SRGAP2/SRGAP2A, a postsynaptic protein that regulates excitatory and inhibitory synapse maturation and density in cortical pyramidal neurons. SRGAP2C is unstable but is able to heterodimerize with SRGAP2/SRGAP2A, thereby reducing SRGAP2/SRGAP2A levels through proteasome-dependent degradation. Inhibition of SRGAP2/SRGAP2A by SRGAP2C leads to an increase in synaptic density and protracted synaptic maturation of both excitatory and inhibitory synapses. Modifies cortical circuit connectivity by increasing the number of local and long-range cortical inputs received by layer 2/3 pyramidal neurons. Also able to increase the probability of sensory-evoked responses by layer 2/3 pyramidal neurons. The polypeptide is SLIT-ROBO Rho GTPase-activating protein 2C (Homo sapiens (Human)).